A 340-amino-acid polypeptide reads, in one-letter code: S-adenosylmethionine:tRNA ribosyltransferase-isomerase (340 aa).

The protein belongs to the QueA family. As to quaternary structure, monomer.

The protein localises to the cytoplasm. The catalysed reaction is 7-aminomethyl-7-carbaguanosine(34) in tRNA + S-adenosyl-L-methionine = epoxyqueuosine(34) in tRNA + adenine + L-methionine + 2 H(+). It participates in tRNA modification; tRNA-queuosine biosynthesis. In terms of biological role, transfers and isomerizes the ribose moiety from AdoMet to the 7-aminomethyl group of 7-deazaguanine (preQ1-tRNA) to give epoxyqueuosine (oQ-tRNA). The sequence is that of S-adenosylmethionine:tRNA ribosyltransferase-isomerase from Francisella tularensis subsp. tularensis (strain FSC 198).